A 91-amino-acid polypeptide reads, in one-letter code: Small ribosomal subunit protein uS19 (91 aa).

The protein belongs to the universal ribosomal protein uS19 family.

Its function is as follows. Protein S19 forms a complex with S13 that binds strongly to the 16S ribosomal RNA. The chain is Small ribosomal subunit protein uS19 from Psychrobacter arcticus (strain DSM 17307 / VKM B-2377 / 273-4).